A 178-amino-acid chain; its full sequence is Heavy metal-associated isoprenylated plant protein 30 (178 aa).

One can recognise an HMA domain in the interval 45-108 (LQTIDLKVRM…AVRRAGKRAE (64 aa)). 2 residues coordinate a metal cation: C56 and C59. Cysteine methyl ester is present on C175. A lipid anchor (S-farnesyl cysteine) is attached at C175. Positions 176–178 (SLM) are cleaved as a propeptide — removed in mature form.

It belongs to the HIPP family. As to quaternary structure, interacts with ZHD3/HB21, ZHD11/HB29 and ZHD8/HB30.

Functionally, heavy-metal-binding protein. This chain is Heavy metal-associated isoprenylated plant protein 30, found in Arabidopsis thaliana (Mouse-ear cress).